The primary structure comprises 101 residues: uncharacterized protein (101 aa).

This is an uncharacterized protein from Cupriavidus necator (strain ATCC 17699 / DSM 428 / KCTC 22496 / NCIMB 10442 / H16 / Stanier 337) (Ralstonia eutropha).